A 333-amino-acid polypeptide reads, in one-letter code: MNIKTIVINWHITESCNYKCKYCFAKWNRVKEIWTNPDNVRKILENLKSIRLEDCLFTQKRLNIVGGEPILQQERLWQVIKMAHEMDFEISIITNGSHLEYICPFVHLISQVGVSIDSFDHKTNVRIGRECNGKTISFQQLKEKLEELRTLNPGLNIKINTVVNEYNFNEILVDRMAELKIDKWKILRQLPFDGKEGISDFKFNTFLFNNLKEEKMPKKDPLSNFLAAFSAPQKQNNVIFVEDNDVMTESYLMIAPDGRLFQNGHKEYEYSHPLTEISIDEALEEINFDQEKFNNRYENYATEEAKYRMEEFFLMNEYEDVSFDCCCPFGDKD.

In terms of domain architecture, Radical SAM core spans 1–239 (MNIKTIVINW…SAPQKQNNVI (239 aa)). [4Fe-4S] cluster contacts are provided by cysteine 16, cysteine 20, and cysteine 23.

Belongs to the radical SAM superfamily. Viperin family. It depends on [4Fe-4S] cluster as a cofactor.

The catalysed reaction is GTP + AH2 + S-adenosyl-L-methionine = 3'-deoxy-3',4'-didehydro-GTP + 5'-deoxyadenosine + L-methionine + A + H2O + H(+). Expression of pVip56 in E.coli (strain MG1655) confers resistance to phage P1; has no effect against T7. Catalyzes the conversion of guanosine triphosphate (GTP) to 3'-deoxy-3',4'-didehydro-GTP (ddhGTP), probably via a SAM-dependent radical mechanism. The modified nucleotide represses transcription from T7 RNA polymerase-directed genes (possibly by acting as chain terminators), strongly suggesting these nucleotides block viral polymerase transcription. How this protein allows bacteria to resist viruses that do not encode their own RNA polymerase (such as lambda, P1) is unknown. The chain is S-adenosylmethionine-dependent nucleotide dehydratase from Fibrobacter sp. (strain UWH6).